The following is a 751-amino-acid chain: Dachshund homolog 1 (751 aa).

Positions 1-178 (MAVPAALIPP…PSPVENTPQN (178 aa)) are disordered. Low complexity-rich tracts occupy residues 20–53 (ISTS…SGPT) and 61–74 (ASSA…TVTS). 2 stretches are compositionally biased toward gly residues: residues 75–97 (PGGG…GGGS) and 107–119 (SSGG…GGGA). A compositionally biased stretch (low complexity) spans 120 to 156 (SSTPITASTGSSSSSSSSSSSSSSSSSSSSSSSSSSS). Polar residues predominate over residues 167–178 (STPSPVENTPQN). The segment at 182-268 (KMVDLRGAKV…LISRKDFETL (87 aa)) is DACHbox-N. An interaction with SIX6 and HDAC3 region spans residues 182–377 (KMVDLRGAKV…VGSSGGSWDK (196 aa)). Disordered stretches follow at residues 273–295 (TNAS…PENS), 351–393 (SNNQ…APVA), 467–525 (SPPS…RIPV), and 537–556 (MGLS…AGHD). 2 stretches are compositionally biased toward polar residues: residues 285 to 294 (RTQSVTSPEN) and 351 to 369 (SNNQ…SSVG). Serine 484 is subject to Phosphoserine. Residues 499–517 (SHPSSHRSSSVSSSPARTE) are compositionally biased toward low complexity. Residues 609–689 (SSIETLLTNI…KAKRKLQEAL (81 aa)) form a DACHbox-C region. Residues 620 to 699 (GLLKVAIDNA…EFETKRREQA (80 aa)) are interaction with SIN3A. Residues 623-711 (KVAIDNARAQ…TLKQAASADS (89 aa)) are a coiled coil.

The protein belongs to the DACH/dachshund family. In terms of assembly, interacts with SIX1, SIX6 and EYA3. Interacts with NCOR1 and HDAC3 through its N-terminus. Interacts with SIN3A through its C-terminus. Interacts with SMAD3 and SMAD4. Expressed at higher levels in adult kidney and lung, and at lower levels in brain and testis. Expressed in embryonal kidneys, eyes, cochleae and limb buds.

The protein resides in the nucleus. Its function is as follows. Transcription factor that is involved in regulation of organogenesis. Seems to be a regulator of SIX1, SIX6 and probably SIX5. Corepression of precursor cell proliferation in myoblasts by SIX1 is switched to coactivation through recruitment of EYA3 to the SIX1-DACH1 complex. Transcriptional activation also seems to involve association of CREBBP. Seems to act as a corepressor of SIX6 in regulating proliferation by directly repressing cyclin-dependent kinase inhibitors, including the p27Kip1 promoter. Inhibits TGF-beta signaling through interaction with SMAD4 and NCOR1. Binds to chromatin DNA via its DACHbox-N domain. The protein is Dachshund homolog 1 (Dach1) of Mus musculus (Mouse).